We begin with the raw amino-acid sequence, 463 residues long: MNPSHGGDDKQRPAMYPQVDQSIPDNPFASTNPYVASSPYLYPSLSSHNLGPNLFPDHGDASNDQSPSAPPQATEEVLIRVPGAILNLIDKSYSVELACGDFTIVRIIQGQNIVAVLANVGNEIQWPLTKNEVAAKVDGSHYFFSIHPPKEKGQGSGSDSDDEQGQKSKSKSDDEILNYGLTIASKGQENVLLVLDQVLRDYSCFTEQRMSEKAKETGEEVLGNSVVADTSPEELKGERKDVVEGQCAAYWTTLAPNVEDYTHSTAKMIASGSGKLIRGILWCGDVTVERLKKGNEVMKNRLSRAEKEKDVSPETLRRIKRVKRVTQMTEKVATGVLSGVVKVSGFITGSMANSKAGKKLFGLLPGEIVLASLDGFSKICDAVEVAGKNVMSTSSTVTTELVNHRYGTKAAEATNEGLDAAGHAFGTAWVAFKIRKAFNPKNVIKPSSLAKSVSELKAKKGSK.

The segment covering 1-12 (MNPSHGGDDKQR) has biased composition (basic and acidic residues). Disordered stretches follow at residues 1 to 31 (MNPS…FAST), 52 to 74 (PNLF…PQAT), and 146 to 172 (IHPP…KSKS). Residues 19–31 (VDQSIPDNPFAST) are compositionally biased toward polar residues. The Senescence domain occupies 269–437 (IASGSGKLIR…AWVAFKIRKA (169 aa)).

The sequence is that of Senescence/dehydration-associated protein At3g51250 from Arabidopsis thaliana (Mouse-ear cress).